The chain runs to 232 residues: Large ribosomal subunit protein uL1 (232 aa).

Belongs to the universal ribosomal protein uL1 family. Part of the 50S ribosomal subunit.

Binds directly to 23S rRNA. The L1 stalk is quite mobile in the ribosome, and is involved in E site tRNA release. In terms of biological role, protein L1 is also a translational repressor protein, it controls the translation of the L11 operon by binding to its mRNA. The polypeptide is Large ribosomal subunit protein uL1 (Ruegeria sp. (strain TM1040) (Silicibacter sp.)).